Consider the following 263-residue polypeptide: Indole-3-glycerol phosphate synthase (263 aa).

This sequence belongs to the TrpC family.

The catalysed reaction is 1-(2-carboxyphenylamino)-1-deoxy-D-ribulose 5-phosphate + H(+) = (1S,2R)-1-C-(indol-3-yl)glycerol 3-phosphate + CO2 + H2O. Its pathway is amino-acid biosynthesis; L-tryptophan biosynthesis; L-tryptophan from chorismate: step 4/5. The chain is Indole-3-glycerol phosphate synthase from Polaromonas naphthalenivorans (strain CJ2).